The following is a 346-amino-acid chain: Phosphoribosylformylglycinamidine cyclo-ligase (346 aa).

Belongs to the AIR synthase family.

The protein localises to the cytoplasm. The enzyme catalyses 2-formamido-N(1)-(5-O-phospho-beta-D-ribosyl)acetamidine + ATP = 5-amino-1-(5-phospho-beta-D-ribosyl)imidazole + ADP + phosphate + H(+). It participates in purine metabolism; IMP biosynthesis via de novo pathway; 5-amino-1-(5-phospho-D-ribosyl)imidazole from N(2)-formyl-N(1)-(5-phospho-D-ribosyl)glycinamide: step 2/2. This Photobacterium profundum (strain SS9) protein is Phosphoribosylformylglycinamidine cyclo-ligase.